The primary structure comprises 191 residues: dTTP/UTP pyrophosphatase (191 aa).

Catalysis depends on aspartate 69, which acts as the Proton acceptor.

This sequence belongs to the Maf family. YhdE subfamily. Requires a divalent metal cation as cofactor.

Its subcellular location is the cytoplasm. It catalyses the reaction dTTP + H2O = dTMP + diphosphate + H(+). The enzyme catalyses UTP + H2O = UMP + diphosphate + H(+). Nucleoside triphosphate pyrophosphatase that hydrolyzes dTTP and UTP. May have a dual role in cell division arrest and in preventing the incorporation of modified nucleotides into cellular nucleic acids. This chain is dTTP/UTP pyrophosphatase, found in Pelotomaculum thermopropionicum (strain DSM 13744 / JCM 10971 / SI).